The sequence spans 295 residues: 33 kDa chaperonin (295 aa).

Intrachain disulfides connect C237/C239 and C270/C273.

It belongs to the HSP33 family. In terms of processing, under oxidizing conditions two disulfide bonds are formed involving the reactive cysteines. Under reducing conditions zinc is bound to the reactive cysteines and the protein is inactive.

The protein localises to the cytoplasm. Redox regulated molecular chaperone. Protects both thermally unfolding and oxidatively damaged proteins from irreversible aggregation. Plays an important role in the bacterial defense system toward oxidative stress. The sequence is that of 33 kDa chaperonin from Shouchella clausii (strain KSM-K16) (Alkalihalobacillus clausii).